We begin with the raw amino-acid sequence, 458 residues long: UDP-N-acetylmuramoylalanine--D-glutamate ligase (458 aa).

ATP is bound at residue 124 to 130 (GSDGKTT).

Belongs to the MurCDEF family.

Its subcellular location is the cytoplasm. It catalyses the reaction UDP-N-acetyl-alpha-D-muramoyl-L-alanine + D-glutamate + ATP = UDP-N-acetyl-alpha-D-muramoyl-L-alanyl-D-glutamate + ADP + phosphate + H(+). The protein operates within cell wall biogenesis; peptidoglycan biosynthesis. Its function is as follows. Cell wall formation. Catalyzes the addition of glutamate to the nucleotide precursor UDP-N-acetylmuramoyl-L-alanine (UMA). This is UDP-N-acetylmuramoylalanine--D-glutamate ligase from Clostridium kluyveri (strain NBRC 12016).